The following is a 334-amino-acid chain: Dual specificity mitogen-activated protein kinase kinase 6 (334 aa).

Residues Met1–Pro11 show a composition bias toward basic residues. The interval Met1–Asp34 is disordered. Positions Ser4–Ala19 are d domain. The region spanning Leu53–Phe314 is the Protein kinase domain. Residues Leu59–Val67 and Lys82 contribute to the ATP site. Asp179 (proton acceptor) is an active-site residue. Ser207 is modified (phosphoserine; by MAPK3). A Phosphothreonine; by MAPK3 modification is found at Thr211. Positions His311–Asp334 are DVD domain.

The protein belongs to the protein kinase superfamily. STE Ser/Thr protein kinase family. MAP kinase kinase subfamily. As to quaternary structure, dimer. Interacts (via its D domain) with its substrates MAPK11, MAPK12, MAPK13 and MAPK14. Interacts (via its DVD domain) with MAP3Ks activators like MAP3K5/ASK1, MAP3K1/MEKK1, MAP3K2/MEKK2, MAP3K3/MEKK3, MAP3K4/MEKK4, MAP3K7/TAK1, MAP3K11/MLK3 and MAP3K17/TAOK2. Interacts with DCTN1. Interacts with EIF2AK2/PKR. In terms of processing, weakly autophosphorylated. Phosphorylated at Ser-207 and Thr-211 by the majority of M3Ks, such as MAP3K5/ASK1, MAP3K1/MEKK1, MAP3K2/MEKK2, MAP3K3/MEKK3, MAP3K4/MEKK4, MAP3K7/TAK1, MAP3K11/MLK3 and MAP3K17/TAOK2. In response to genotoxic stress, MAP3K-phosphorylated MAP2K6 is ubiquitinated and degraded by the SCF(FBXO31) complex.

It is found in the nucleus. The protein resides in the cytoplasm. Its subcellular location is the cytoskeleton. It catalyses the reaction L-seryl-[protein] + ATP = O-phospho-L-seryl-[protein] + ADP + H(+). It carries out the reaction L-threonyl-[protein] + ATP = O-phospho-L-threonyl-[protein] + ADP + H(+). The catalysed reaction is L-tyrosyl-[protein] + ATP = O-phospho-L-tyrosyl-[protein] + ADP + H(+). With respect to regulation, activated by dual phosphorylation on Ser-207 and Thr-211 in response to a variety of cellular stresses, including UV radiation, osmotic shock, hypoxia, inflammatory cytokines, interferon gamma (IFNG), and less often by growth factors. MAP2K6/MKK6 is activated by the majority of M3Ks, such as MAP3K5/ASK1, MAP3K1/MEKK1, MAP3K2/MEKK2, MAP3K3/MEKK3, MAP3K4/MEKK4, MAP3K7/TAK1, MAP3K11/MLK3 and MAP3K17/TAOK2. Its function is as follows. Dual specificity protein kinase which acts as an essential component of the MAP kinase signal transduction pathway. With MAP3K3/MKK3, catalyzes the concomitant phosphorylation of a threonine and a tyrosine residue in the MAP kinases p38 MAPK11, MAPK12, MAPK13 and MAPK14 and plays an important role in the regulation of cellular responses to cytokines and all kinds of stresses. Especially, MAP2K3/MKK3 and MAP2K6/MKK6 are both essential for the activation of MAPK11 and MAPK13 induced by environmental stress, whereas MAP2K6/MKK6 is the major MAPK11 activator in response to TNF. MAP2K6/MKK6 also phosphorylates and activates PAK6. The p38 MAP kinase signal transduction pathway leads to direct activation of transcription factors. Nuclear targets of p38 MAP kinase include the transcription factors ATF2 and ELK1. Within the p38 MAPK signal transduction pathway, MAP3K6/MKK6 mediates phosphorylation of STAT4 through MAPK14 activation, and is therefore required for STAT4 activation and STAT4-regulated gene expression in response to IL-12 stimulation. The pathway is also crucial for IL-6-induced SOCS3 expression and down-regulation of IL-6-mediated gene induction; and for IFNG-dependent gene transcription. Has a role in osteoclast differentiation through NF-kappa-B transactivation by TNFSF11, and in endochondral ossification and since SOX9 is another likely downstream target of the p38 MAPK pathway. MAP2K6/MKK6 mediates apoptotic cell death in thymocytes. Acts also as a regulator for melanocytes dendricity, through the modulation of Rho family GTPases. The sequence is that of Dual specificity mitogen-activated protein kinase kinase 6 (MAP2K6) from Bos taurus (Bovine).